Here is a 1034-residue protein sequence, read N- to C-terminus: Teashirt homolog 2 (1034 aa).

Residues 1–90 are disordered; it reads MPRRKQQAPK…NESLLSDASD (90 aa). Residues 13-38 adopt a coiled-coil conformation; sequence AGYAQEEQLKEEEEIKEEEEEEDSGS. Residues 21–36 show a composition bias toward acidic residues; the sequence is LKEEEEIKEEEEEEDS. Positions 65-90 are enriched in polar residues; the sequence is SYQNSPGSHLSNQDAENESLLSDASD. A Glycyl lysine isopeptide (Lys-Gly) (interchain with G-Cter in SUMO2) cross-link involves residue Lys-188. C2H2-type zinc fingers lie at residues 215 to 239 and 275 to 299; these read FRCR…ETGH and LKCM…KTKH. A disordered region spans residues 239–265; that stretch reads HYQDDNRKKDKLRPTSYSKPRKRAFQD. Residues Lys-306 and Lys-315 each participate in a glycyl lysine isopeptide (Lys-Gly) (interchain with G-Cter in SUMO2) cross-link. The segment at 380 to 404 adopts a C2H2-type 3; atypical zinc-finger fold; it reads LKCMECGSSHDTLQQLTTHMMVTGH. Lys-417 participates in a covalent cross-link: Glycyl lysine isopeptide (Lys-Gly) (interchain with G-Cter in SUMO2). Residues 432-455 are compositionally biased toward polar residues; sequence LSEAPNSDSLAPKPSSNSASDCTA. The tract at residues 432 to 496 is disordered; that stretch reads LSEAPNSDSL…PLQKPLDPTI (65 aa). Positions 459 to 482 are enriched in basic and acidic residues; that stretch reads ELKKESKKERPEETSKDEKVVKSE. Residues Lys-461, Lys-480, Lys-497, Lys-601, and Lys-652 each participate in a glycyl lysine isopeptide (Lys-Gly) (interchain with G-Cter in SUMO2) cross-link. 2 disordered regions span residues 598-676 and 763-789; these read TQVK…TSAL and QPID…PPQK. The span at 600–668 shows a compositional bias: basic and acidic residues; the sequence is VKKESEDKDE…KEGSEKEKPQ (69 aa). Glycyl lysine isopeptide (Lys-Gly) (interchain with G-Cter in SUMO2) cross-links involve residues Lys-800 and Lys-820. Residues 841–911 constitute a DNA-binding region (homeobox; atypical); that stretch reads RKGRQSNWNP…NVKYQLRKTG (71 aa). The segment at 926-948 adopts a C2H2-type 4 zinc-finger fold; the sequence is FYCSDCASQFRTPSTYISHLESH. Residue Lys-966 forms a Glycyl lysine isopeptide (Lys-Gly) (interchain with G-Cter in SUMO2) linkage. Ser-980 carries the post-translational modification Phosphoserine. The C2H2-type 5 zinc finger occupies 994 to 1017; it reads FKCKLCCRTFVSKHAVKLHLSKTH. Residues 1014–1034 form a disordered region; sequence SKTHSKSPEHHSQFVTDVDEE.

Belongs to the teashirt C2H2-type zinc-finger protein family. Interacts (via homeobox domain) with APBB1 (via PID domain 1). In terms of processing, sumoylated. As to expression, expressed in brain; strongly reduced in post-mortem elderly subjects with Alzheimer disease.

The protein resides in the nucleus. Functionally, probable transcriptional regulator involved in developmental processes. May act as a transcriptional repressor (Potential). This is Teashirt homolog 2 (TSHZ2) from Homo sapiens (Human).